Reading from the N-terminus, the 425-residue chain is Actin-related protein 3 (425 aa).

This sequence belongs to the actin family. ARP3 subfamily. In terms of assembly, component of the Arp2/3 complex, at least composed of arx-1, arx-2, arx-4 and arx-6.

The protein localises to the cytoplasm. The protein resides in the cytoskeleton. Its function is as follows. Functions as ATP-binding component of the Arp2/3 complex which is involved in regulation of actin polymerization and together with an activating nucleation-promoting factor (NPF) mediates the formation of branched actin networks. Seems to contact the pointed end of the daughter actin filament. Plays a role in time-dependent memory loss and the retention of conditioned behavior over time. The sequence is that of Actin-related protein 3 from Caenorhabditis elegans.